A 255-amino-acid polypeptide reads, in one-letter code: Small ribosomal subunit protein eS1 (255 aa).

An N-acetylalanine; partial modification is found at alanine 2.

It belongs to the eukaryotic ribosomal protein eS1 family. In terms of assembly, component of the small ribosomal subunit. Mature ribosomes consist of a small (40S) and a large (60S) subunit. The 40S subunit contains about 33 different proteins and 1 molecule of RNA (18S). The 60S subunit contains about 49 different proteins and 3 molecules of RNA (25S, 5.8S and 5S).

The protein localises to the cytoplasm. The polypeptide is Small ribosomal subunit protein eS1 (Arthroderma otae (strain ATCC MYA-4605 / CBS 113480) (Microsporum canis)).